Reading from the N-terminus, the 204-residue chain is Cytochrome c biogenesis ATP-binding export protein CcmA (204 aa).

An ABC transporter domain is found at 2-204; sequence IEVRDLGVSR…LDAEDLGGFL (203 aa). An ATP-binding site is contributed by 34 to 41; sequence GPNGIGKT.

This sequence belongs to the ABC transporter superfamily. CcmA exporter (TC 3.A.1.107) family. As to quaternary structure, the complex is composed of two ATP-binding proteins (CcmA) and two transmembrane proteins (CcmB).

The protein localises to the cell inner membrane. It carries out the reaction heme b(in) + ATP + H2O = heme b(out) + ADP + phosphate + H(+). Its function is as follows. Part of the ABC transporter complex CcmAB involved in the biogenesis of c-type cytochromes; once thought to export heme, this seems not to be the case, but its exact role is uncertain. Responsible for energy coupling to the transport system. The sequence is that of Cytochrome c biogenesis ATP-binding export protein CcmA from Ruegeria sp. (strain TM1040) (Silicibacter sp.).